The chain runs to 236 residues: Phycobilisome rod-core linker polypeptide cpcG (236 aa).

The 183-residue stretch at 11–193 (STQNQRVNGF…LDYNFLYKKN (183 aa)) folds into the PBS-linker domain.

It belongs to the phycobilisome linker protein family. The phycobilisome is a hemidiscoidal structure that is composed of two distinct substructures: a core complex and a number of rods radiating from the core.

Its subcellular location is the plastid. The protein localises to the chloroplast. It is found in the chloroplast thylakoid membrane. Functionally, rod-core linker protein required for attachment of phycocyanin to allophycocyanin in cores of phycobilisomes. Its function is as follows. Linker polypeptides determine the state of aggregation and the location of the disk-shaped phycobiliprotein units within the phycobilisome and modulate their spectroscopic properties in order to mediate a directed and optimal energy transfer. In Aglaothamnion neglectum (Red alga), this protein is Phycobilisome rod-core linker polypeptide cpcG (cpcG).